A 53-amino-acid chain; its full sequence is UPF0391 membrane protein Bcep18194_C7021 (53 aa).

A run of 2 helical transmembrane segments spans residues 5 to 25 (AVIF…GIAA) and 30 to 50 (IAKI…LLGV).

It belongs to the UPF0391 family.

It localises to the cell membrane. This Burkholderia lata (strain ATCC 17760 / DSM 23089 / LMG 22485 / NCIMB 9086 / R18194 / 383) protein is UPF0391 membrane protein Bcep18194_C7021.